Here is a 325-residue protein sequence, read N- to C-terminus: tRNA N6-adenosine threonylcarbamoyltransferase (325 aa).

Positions 107, 111, and 127 each coordinate Fe cation. Residues 127–131 (YVSGG), Asp-159, Gly-172, Glu-176, and Asn-257 each bind substrate. Residue Asp-285 participates in Fe cation binding.

Belongs to the KAE1 / TsaD family. Monomer. Component of the KEOPS complex that consists of Kae1, Bud32, Cgi121 and Pcc1; the whole complex dimerizes. Requires Fe(2+) as cofactor.

The protein resides in the cytoplasm. The catalysed reaction is L-threonylcarbamoyladenylate + adenosine(37) in tRNA = N(6)-L-threonylcarbamoyladenosine(37) in tRNA + AMP + H(+). In terms of biological role, required for the formation of a threonylcarbamoyl group on adenosine at position 37 (t(6)A37) in tRNAs that read codons beginning with adenine. Is a component of the KEOPS complex that is probably involved in the transfer of the threonylcarbamoyl moiety of threonylcarbamoyl-AMP (TC-AMP) to the N6 group of A37. Kae1 likely plays a direct catalytic role in this reaction, but requires other protein(s) of the complex to fulfill this activity. The protein is tRNA N6-adenosine threonylcarbamoyltransferase of Thermococcus kodakarensis (strain ATCC BAA-918 / JCM 12380 / KOD1) (Pyrococcus kodakaraensis (strain KOD1)).